A 559-amino-acid chain; its full sequence is Formate--tetrahydrofolate ligase (559 aa).

68–75 provides a ligand contact to ATP; sequence TPAGEGKS.

This sequence belongs to the formate--tetrahydrofolate ligase family.

It carries out the reaction (6S)-5,6,7,8-tetrahydrofolate + formate + ATP = (6R)-10-formyltetrahydrofolate + ADP + phosphate. Its pathway is one-carbon metabolism; tetrahydrofolate interconversion. The protein is Formate--tetrahydrofolate ligase of Lactobacillus gasseri (strain ATCC 33323 / DSM 20243 / BCRC 14619 / CIP 102991 / JCM 1131 / KCTC 3163 / NCIMB 11718 / NCTC 13722 / AM63).